The primary structure comprises 1149 residues: MPTMRRTVSEIRSRAEGYEKTDDVSEKTSLADQEEIRTIFINQPQLTKFCNNHVSTAKYNIITFLPRFLYSQFRRAANSFFLFIALLQQIPDVSPTGRYTTLVPLLFILAVAAIKEIIEDIKRHKADNAVNKKQTQVLRNGAWEIVHWEKVNVGDIVIIKGKEYIPADTVLLSSSEPQAMCYIETSNLDGETNLKIRQGLPATSDIKDIDSLMRLSGRIECESPNRHLYDFVGNIRLDGRSTVPLGADQILLRGAQLRNTQWVHGIVVYTGHDTKLMQNSTSPPLKLSNVERITNVQILILFCILIAMSLVCSVGSAIWNRRHSGRDWYLNLNYGGANNFGLNFLTFIILFNNLIPISLLVTLEVVKFTQAYFINWDLDMHYEPTDTAAMARTSNLNVELGQVKYIFSDKTGTLTCNVMQFKKCTIAGVAYGQNSQFGDEKTFSDSSLLENLQNNHPTAPIICEFLTMMAVCHTAVPEREGDKIIYQAASPDEGALVRAAKQLNFVFTGRTPDSVIIDSLGQEERYELLNVLEFTSARKRMSVIVRTPSGKLRLYCKGADTVIYDRLAETSKYKEITLKHLEQFATEGLRTLCFAVAEISESDFQEWRAVYHRASTSVQNRLLKLEESYELIEKNLQLLGATAIEDKLQDQVPETIETLMKADIKIWILTGDKQETAINIGHSCKLRRKNMGMIVINEGSLDGTRETLSRHCTTLGDALRKENDFALIIDGKTLKYALTFGVRQYFLDLALSCKAVICCRVSPLQKSEVVEMVKKQVKVITLAIGDGANDVSMIQTAHVGVGISGNEGLQAANSSDYSIAQFKYLKNLLMVHGAWNYNRGSKCILYCFYKNIVLYIIEIWFAFVNGFSGQILFERWCIGLYNVMFTAMPPLTLGIFERSCRKEYMLKYPELYKTSQNALDFNTKVFWVHCLNGLFHSVILFWFPLKALQYGTVFENGRTSDYLLLGNFVYTFVVITVCLKAGLETSYWTWFSHIAIWGSIALWVVFFGIYSSLWPAVPMAPDMSGEAAMLFSSGVFWMGLLFIPVASLLLDVVYKVIKRTAFKTLVDEVQELEAKSQDPGAVVLGKSLTERAQLLKNVFKKNHVNLYRSESLQQNLLHGYAFSQDENGIVSQSEVIRAYDTTKQRPDEW.

The Cytoplasmic segment spans residues 1 to 65 (MPTMRRTVSE…TAKYNIITFL (65 aa)). Residue serine 25 is modified to Phosphoserine. Residue threonine 28 is modified to Phosphothreonine. A Phosphoserine modification is found at serine 29. Residues 66–86 (PRFLYSQFRRAANSFFLFIAL) traverse the membrane as a helical segment. Over 87 to 92 (LQQIPD) the chain is Extracellular. A helical transmembrane segment spans residues 93-115 (VSPTGRYTTLVPLLFILAVAAIK). Over 116 to 297 (EIIEDIKRHK…SNVERITNVQ (182 aa)) the chain is Cytoplasmic. Residues 298 to 319 (ILILFCILIAMSLVCSVGSAIW) form a helical membrane-spanning segment. The Extracellular segment spans residues 320–344 (NRRHSGRDWYLNLNYGGANNFGLNF). A helical membrane pass occupies residues 345 to 366 (LTFIILFNNLIPISLLVTLEVV). Over 367 to 842 (KFTQAYFINW…GAWNYNRGSK (476 aa)) the chain is Cytoplasmic. Aspartate 409 serves as the catalytic 4-aspartylphosphate intermediate. ATP is bound by residues aspartate 409, lysine 410, threonine 411, glutamate 493, phenylalanine 534, lysine 557, arginine 590, threonine 670, glycine 671, aspartate 672, 726 to 733 (ALIIDGKT), arginine 760, and lysine 766. Mg(2+) is bound at residue aspartate 409. Threonine 411 is a Mg(2+) binding site. Aspartate 786 is a Mg(2+) binding site. Asparagine 789 and aspartate 790 together coordinate ATP. Aspartate 790 is a Mg(2+) binding site. Residues 843 to 863 (CILYCFYKNIVLYIIEIWFAF) form a helical membrane-spanning segment. The Extracellular portion of the chain corresponds to 864–875 (VNGFSGQILFER). A helical membrane pass occupies residues 876–895 (WCIGLYNVMFTAMPPLTLGI). The Cytoplasmic portion of the chain corresponds to 896-925 (FERSCRKEYMLKYPELYKTSQNALDFNTKV). The chain crosses the membrane as a helical span at residues 926–947 (FWVHCLNGLFHSVILFWFPLKA). Topologically, residues 948 to 961 (LQYGTVFENGRTSD) are extracellular. The helical transmembrane segment at 962–984 (YLLLGNFVYTFVVITVCLKAGLE) threads the bilayer. Residues 985–990 (TSYWTW) are Cytoplasmic-facing. A helical membrane pass occupies residues 991–1011 (FSHIAIWGSIALWVVFFGIYS). Over 1012-1029 (SLWPAVPMAPDMSGEAAM) the chain is Extracellular. A helical transmembrane segment spans residues 1030–1055 (LFSSGVFWMGLLFIPVASLLLDVVYK). Residues 1056 to 1149 (VIKRTAFKTL…DTTKQRPDEW (94 aa)) are Cytoplasmic-facing. Residue 1080–1087 (GAVVLGKS) coordinates ATP. Serine 1111 carries the phosphoserine modification.

This sequence belongs to the cation transport ATPase (P-type) (TC 3.A.3) family. Type IV subfamily. In terms of assembly, component of a P4-ATPase flippase complex which consists of a catalytic alpha subunit and an accessory beta subunit. Interacts with TMEM30A to form a flippase complex; this complex forms an intermediate phosphoenzyme. Interacts with TMEM30B; this interaction is reported conflictingly. Requires Mg(2+) as cofactor. Cleaved by calpain in a caspase- and calcium influx-dependent manner during platelet apoptosis leading to a 100 kDa polypeptide. Kidney.

Its subcellular location is the cytoplasmic vesicle. It localises to the secretory vesicle. It is found in the chromaffin granule membrane. The protein localises to the cytoplasmic granule. The protein resides in the cell membrane. Its subcellular location is the endoplasmic reticulum. It localises to the golgi apparatus. It catalyses the reaction ATP + H2O + phospholipidSide 1 = ADP + phosphate + phospholipidSide 2.. The enzyme catalyses a 1,2-diacyl-sn-glycero-3-phospho-L-serine(out) + ATP + H2O = a 1,2-diacyl-sn-glycero-3-phospho-L-serine(in) + ADP + phosphate + H(+). Functionally, catalytic component of a P4-ATPase flippase complex which catalyzes the hydrolysis of ATP coupled to the transport of aminophospholipids from the outer to the inner leaflet of various membranes and ensures the maintenance of asymmetric distribution of phospholipids. Phospholipid translocation also seems to be implicated in vesicle formation and in uptake of lipid signaling molecules. In vitro, its ATPase activity is selectively and stereospecifically stimulated by phosphatidylserine (PS). The flippase complex ATP8A1:TMEM30A seems to play a role in regulation of cell migration probably involving flippase-mediated translocation of phosphatidylethanolamine (PE) at the cell membrane. Acts as aminophospholipid translocase at the cell membrane in neuronal cells. This Bos taurus (Bovine) protein is Probable phospholipid-transporting ATPase IA.